Reading from the N-terminus, the 227-residue chain is Chaperone protein FocC (227 aa).

An N-terminal signal peptide occupies residues 1–21 (MRIWAVLASFLVFFYIPQSYA).

This sequence belongs to the periplasmic pilus chaperone family.

It is found in the periplasm. Involved in the biogenesis of the F1C fimbriae. The protein is Chaperone protein FocC (focC) of Escherichia coli O6:H1 (strain CFT073 / ATCC 700928 / UPEC).